The following is a 129-amino-acid chain: Small ribosomal subunit protein uS11 (129 aa).

This sequence belongs to the universal ribosomal protein uS11 family. In terms of assembly, part of the 30S ribosomal subunit. Interacts with proteins S7 and S18. Binds to IF-3.

In terms of biological role, located on the platform of the 30S subunit, it bridges several disparate RNA helices of the 16S rRNA. Forms part of the Shine-Dalgarno cleft in the 70S ribosome. The polypeptide is Small ribosomal subunit protein uS11 (Mesorhizobium japonicum (strain LMG 29417 / CECT 9101 / MAFF 303099) (Mesorhizobium loti (strain MAFF 303099))).